The primary structure comprises 151 residues: Transcriptional repressor NrdR (151 aa).

Positions 1–24 are disordered; it reads MRCPKCQHNGTRVLDSRPSDESRS. Residues 3-34 fold into a zinc finger; the sequence is CPKCQHNGTRVLDSRPSDESRSIKRRRECEKC. The segment covering 14-24 has biased composition (basic and acidic residues); the sequence is LDSRPSDESRS. The region spanning 49–139 is the ATP-cone domain; that stretch reads LLIIKKDGMR…VYRQFKDINV (91 aa).

Belongs to the NrdR family. Requires Zn(2+) as cofactor.

In terms of biological role, negatively regulates transcription of bacterial ribonucleotide reductase nrd genes and operons by binding to NrdR-boxes. In Shouchella clausii (strain KSM-K16) (Alkalihalobacillus clausii), this protein is Transcriptional repressor NrdR.